The chain runs to 315 residues: Cysteine proteinase 1 (315 aa).

An N-terminal signal peptide occupies residues 1-13 (MFTFILMFYIGYG). The propeptide at 14-93 (IDFNTWVANN…KGEVRYLNIQ (80 aa)) is activation peptide. 2 disulfide bridges follow: cysteine 115-cysteine 161 and cysteine 152-cysteine 193. Cysteine 118 is an active-site residue. Active-site residues include histidine 259 and asparagine 279.

It belongs to the peptidase C1 family.

It is found in the lysosome. With respect to regulation, inhibited by cysteine protease inhibitors ICP1 and ICP2. Its function is as follows. Cysteine protease which degrades matrix proteins such as collagen, laminin and fibronectin and thus is involved in the destruction of human tissue. Can abolish adhesion. May play an important role in pathogenicity. The protein is Cysteine proteinase 1 of Entamoeba histolytica (strain ATCC 30459 / HM-1:IMSS / ABRM).